The following is a 218-amino-acid chain: Claudin-5 (218 aa).

Residues 1–7 (MGSAALE) are Cytoplasmic-facing. A helical transmembrane segment spans residues 8 to 28 (ILGLVLCLVGWGGLILACGLP). At 29–81 (MWQVTAFLDHNIVTAQTTWKGLWMSCVVQSTGHMQCKVYDSVLALSTEVQAAR) the chain is on the extracellular side. Residues 82–102 (ALTVSAVLLAFVALFVTLAGA) form a helical membrane-spanning segment. The Cytoplasmic segment spans residues 103–122 (QCTTCVAPGPAKARVALTGG). The chain crosses the membrane as a helical span at residues 123 to 143 (VLYLFCGLLALVPLCWFANIV). Over 144–159 (VREFYDPSVPVSQKYE) the chain is Extracellular. Residues 160 to 180 (LGAALYIGWAATALLMVGGCL) form a helical membrane-spanning segment. Topologically, residues 181–218 (LCCGAWVCTGRPDLSFPVKYSAPRRPTATGDYDKKNYV) are cytoplasmic. An interactions with TJP1, TJP2 and TJP3 region spans residues 217–218 (YV).

It belongs to the claudin family. As to quaternary structure, directly interacts with TJP1/ZO-1, TJP2/ZO-2 and TJP3/ZO-3. Interacts with MPDZ.

The protein resides in the cell junction. It is found in the tight junction. Its subcellular location is the cell membrane. Functionally, plays a major role in tight junction-specific obliteration of the intercellular space. This Homo sapiens (Human) protein is Claudin-5 (CLDN5).